Here is a 358-residue protein sequence, read N- to C-terminus: scyllo-inositol 2-dehydrogenase (NADP(+)) IolW (358 aa).

It belongs to the Gfo/Idh/MocA family.

The enzyme catalyses scyllo-inositol + NADP(+) = scyllo-inosose + NADPH + H(+). Its function is as follows. Catalyzes the reversible NADPH-dependent reduction of scyllo-inosose (SIS) to scyllo-inositol (SI). Cannot use NADH instead of NADPH. May be involved in reduction of not only SIS but also various oxidized compounds manifested upon stressful conditions. This is scyllo-inositol 2-dehydrogenase (NADP(+)) IolW from Bacillus subtilis (strain 168).